The following is a 330-amino-acid chain: 6-phosphogluconolactonase (330 aa).

It belongs to the cycloisomerase 2 family.

The enzyme catalyses 6-phospho-D-glucono-1,5-lactone + H2O = 6-phospho-D-gluconate + H(+). It functions in the pathway carbohydrate degradation; pentose phosphate pathway; D-ribulose 5-phosphate from D-glucose 6-phosphate (oxidative stage): step 2/3. In terms of biological role, catalyzes the hydrolysis of 6-phosphogluconolactone to 6-phosphogluconate. The sequence is that of 6-phosphogluconolactonase from Erwinia tasmaniensis (strain DSM 17950 / CFBP 7177 / CIP 109463 / NCPPB 4357 / Et1/99).